A 430-amino-acid polypeptide reads, in one-letter code: Histidine--tRNA ligase (430 aa).

Belongs to the class-II aminoacyl-tRNA synthetase family. Homodimer.

It localises to the cytoplasm. It catalyses the reaction tRNA(His) + L-histidine + ATP = L-histidyl-tRNA(His) + AMP + diphosphate + H(+). The protein is Histidine--tRNA ligase (hisS) of Chlamydia pneumoniae (Chlamydophila pneumoniae).